The chain runs to 269 residues: Interleukin-1 beta (269 aa).

A propeptide spanning residues 1 to 116 is cleaved from the precursor; the sequence is MAEVPELASE…TRNNDACVHD (116 aa).

It belongs to the IL-1 family. Monomer. In its precursor form, weakly interacts with full-length MEFV; the mature cytokine does not interact at all. Interacts with integrins ITGAV:ITGBV and ITGA5:ITGB1; integrin-binding is required for IL1B signaling. Interacts with cargo receptor TMED10; the interaction is direct and is required for the secretion of IL1B mature form. Interacts with HSP90AB1; the interaction facilitates cargo translocation into the ERGIC. Interacts with HSP90B1; the interaction facilitates cargo translocation into the ERGIC.

It is found in the cytoplasm. The protein localises to the cytosol. Its subcellular location is the secreted. The protein resides in the lysosome. It localises to the extracellular exosome. Functionally, potent pro-inflammatory cytokine. Initially discovered as the major endogenous pyrogen, induces prostaglandin synthesis, neutrophil influx and activation, T-cell activation and cytokine production, B-cell activation and antibody production, and fibroblast proliferation and collagen production. Promotes Th17 differentiation of T-cells. Synergizes with IL12/interleukin-12 to induce IFNG synthesis from T-helper 1 (Th1) cells. Plays a role in angiogenesis by inducing VEGF production synergistically with TNF and IL6. Involved in transduction of inflammation downstream of pyroptosis: its mature form is specifically released in the extracellular milieu by passing through the gasdermin-D (GSDMD) pore. The protein is Interleukin-1 beta (IL1B) of Macaca nemestrina (Pig-tailed macaque).